The following is a 364-amino-acid chain: MPGNTFGHVFRVTTWGESHGPAVGCTVDGCPAGLPLDVADIQRELDRRRVGQSRVSSQRREADEVQILSGVFEGRTTGTPITMLVYNTDAKSHHYENIKDRYRPGHADYTWDAKYGFRDWRGGGRSSARETIGRVAAGAVARRLLATFGITLVGYTLQLADLRAEVFDEAEIERNIMRCPDARVAALMVERVDQARRELDSLGGIVEVRARGVPPGLGEPVFDKLQADIGKAMFSIPAIKGVEIGEGFGVAMLRGSQNNDPFIRRDDGTIGTVSNHHGGILGGISTGEEIVVRLAAKPPASIAQPQQTVDRDGNPVTIEVHGRHDPTVLPRLVPVAEAMLALVLADHLLRQRLARVTWEDRSDD.

2 residues coordinate NADP(+): Arg48 and Arg54. Residues 125–127 (RSS), Gly282, 297–301 (KPPAS), and Arg323 contribute to the FMN site.

The protein belongs to the chorismate synthase family. In terms of assembly, homotetramer. FMNH2 is required as a cofactor.

It catalyses the reaction 5-O-(1-carboxyvinyl)-3-phosphoshikimate = chorismate + phosphate. It functions in the pathway metabolic intermediate biosynthesis; chorismate biosynthesis; chorismate from D-erythrose 4-phosphate and phosphoenolpyruvate: step 7/7. In terms of biological role, catalyzes the anti-1,4-elimination of the C-3 phosphate and the C-6 proR hydrogen from 5-enolpyruvylshikimate-3-phosphate (EPSP) to yield chorismate, which is the branch point compound that serves as the starting substrate for the three terminal pathways of aromatic amino acid biosynthesis. This reaction introduces a second double bond into the aromatic ring system. The polypeptide is Chorismate synthase (Chloroflexus aurantiacus (strain ATCC 29366 / DSM 635 / J-10-fl)).